The chain runs to 449 residues: Hyaluronidase-3 (449 aa).

The signal sequence occupies residues 1-23 (MYHIWIKFLAAWIFLKKFNGVHV). Disulfide bonds link cysteine 47-cysteine 340 and cysteine 211-cysteine 227. N-linked (GlcNAc...) asparagine glycans are attached at residues asparagine 67, asparagine 103, and asparagine 111. Glutamate 135 serves as the catalytic Proton donor. Residue asparagine 153 is glycosylated (N-linked (GlcNAc...) asparagine). N-linked (GlcNAc...) asparagine glycosylation occurs at asparagine 357. Disulfide bonds link cysteine 365/cysteine 376, cysteine 370/cysteine 427, and cysteine 429/cysteine 438. An N-linked (GlcNAc...) asparagine glycan is attached at asparagine 401. The EGF-like domain occupies 427-438 (CQCYQGWKGLYC).

This sequence belongs to the glycosyl hydrolase 56 family. Monomer. As to expression, expressed by the venom gland.

It localises to the secreted. The enzyme catalyses Random hydrolysis of (1-&gt;4)-linkages between N-acetyl-beta-D-glucosamine and D-glucuronate residues in hyaluronate.. Its function is as follows. Snake venom endo-hyaluronidase that degrades hyaluronan to smaller oligosaccharide fragments. In venom, it is not toxic by itself, but increases the diffusion of other venom proteins by degrading the extracellular matrix. In addition, it displays antiedematogenic activity. In Cerastes cerastes (Horned desert viper), this protein is Hyaluronidase-3.